The following is a 766-amino-acid chain: 5-methyltetrahydropteroyltriglutamate--homocysteine methyltransferase (766 aa).

5-methyltetrahydropteroyltri-L-glutamate is bound by residues 16–19 (RELK) and lysine 124. L-homocysteine contacts are provided by residues 445–447 (IGS) and glutamate 498. L-methionine is bound by residues 445 to 447 (IGS) and glutamate 498. 5-methyltetrahydropteroyltri-L-glutamate is bound by residues 529–530 (RC) and tryptophan 575. Aspartate 613 serves as a coordination point for L-homocysteine. Aspartate 613 serves as a coordination point for L-methionine. Residue glutamate 619 coordinates 5-methyltetrahydropteroyltri-L-glutamate. Residues histidine 655, cysteine 657, and glutamate 679 each coordinate Zn(2+). Histidine 708 functions as the Proton donor in the catalytic mechanism. Residue cysteine 740 participates in Zn(2+) binding.

Belongs to the vitamin-B12 independent methionine synthase family. Requires Zn(2+) as cofactor.

The enzyme catalyses 5-methyltetrahydropteroyltri-L-glutamate + L-homocysteine = tetrahydropteroyltri-L-glutamate + L-methionine. Its pathway is amino-acid biosynthesis; L-methionine biosynthesis via de novo pathway; L-methionine from L-homocysteine (MetE route): step 1/1. Its function is as follows. Catalyzes the transfer of a methyl group from 5-methyltetrahydrofolate to homocysteine resulting in methionine formation. The polypeptide is 5-methyltetrahydropteroyltriglutamate--homocysteine methyltransferase (Pseudomonas syringae pv. tomato (strain ATCC BAA-871 / DC3000)).